Reading from the N-terminus, the 333-residue chain is Taste receptor type 2 member 123 (333 aa).

At 1–13 (MFSQKINYSHLFT) the chain is on the extracellular side. N-linked (GlcNAc...) asparagine glycosylation is present at asparagine 7. The helical transmembrane segment at 14–34 (FSITLYVEIVTGILGHGFIAL) threads the bilayer. The Cytoplasmic segment spans residues 35–60 (VNIMDWVKRRRISSVDQILTALALTR). A helical membrane pass occupies residues 61–81 (FIYVLSMLICILLFMLCPHLP). Residues 82–90 (RRSEMLSAM) are Extracellular-facing. The chain crosses the membrane as a helical span at residues 91–111 (GIFWVVNSHFSIWLTTCLGVF). Topologically, residues 112 to 134 (YFLKIANFSNSFFLYLKWRVKKV) are cytoplasmic. A helical transmembrane segment spans residues 135–155 (ILIIILASLIFLTLHILSLGI). Residues 156–205 (YDQFSIAAYVGNMSYSLTDLTQFSSTFLFSNSSNVFLITNSSHVFLPINS) are Extracellular-facing. N-linked (GlcNAc...) asparagine glycans are attached at residues asparagine 167, asparagine 186, and asparagine 195. Residues 206–226 (LFMLIPFTVSLVAFLMLIFSL) form a helical membrane-spanning segment. Residues 227–253 (WKHHKKMQVNAKQPRDVSTMAHIKALQ) are Cytoplasmic-facing. A helical transmembrane segment spans residues 254-274 (TVFSFLLLYAIYLLFLIIGIL). At 275–281 (NLGLMEK) the chain is on the extracellular side. The helical transmembrane segment at 282 to 302 (IVILIFDHISGAVFPISHSFV) threads the bilayer. The Cytoplasmic segment spans residues 303 to 333 (LILGNSKLRQASLSVLPCLRCQSKDMDTMGL).

It belongs to the G-protein coupled receptor T2R family. In terms of tissue distribution, expressed in subsets of taste receptor cells of the tongue and palate epithelium and exclusively in gustducin-positive cells. Expressed in the duodenum, antrum and fundus (part of the stomach).

It localises to the membrane. Its function is as follows. Gustducin-coupled receptor implicated in the perception of bitter compounds in the oral cavity and the gastrointestinal tract. Signals through PLCB2 and the calcium-regulated cation channel TRPM5. In Mus musculus (Mouse), this protein is Taste receptor type 2 member 123 (Tas2r123).